A 156-amino-acid polypeptide reads, in one-letter code: Sec-independent protein translocase protein TatB (156 aa).

A helical membrane pass occupies residues 2-22 (FSSVGWGEIFLLVVVGLVVIG). The interval 100–156 (KIMAEGTEGEAQRNKQAADNNANVVERPADGSTARPTQNDPKDGPNYSGGVSWTDII) is disordered. The segment covering 113 to 122 (NKQAADNNAN) has biased composition (polar residues).

It belongs to the TatB family. As to quaternary structure, the Tat system comprises two distinct complexes: a TatABC complex, containing multiple copies of TatA, TatB and TatC subunits, and a separate TatA complex, containing only TatA subunits. Substrates initially bind to the TatABC complex, which probably triggers association of the separate TatA complex to form the active translocon.

The protein localises to the cell membrane. Its function is as follows. Part of the twin-arginine translocation (Tat) system that transports large folded proteins containing a characteristic twin-arginine motif in their signal peptide across membranes. Together with TatC, TatB is part of a receptor directly interacting with Tat signal peptides. TatB may form an oligomeric binding site that transiently accommodates folded Tat precursor proteins before their translocation. The chain is Sec-independent protein translocase protein TatB from Corynebacterium glutamicum (strain ATCC 13032 / DSM 20300 / JCM 1318 / BCRC 11384 / CCUG 27702 / LMG 3730 / NBRC 12168 / NCIMB 10025 / NRRL B-2784 / 534).